The chain runs to 102 residues: uncharacterized protein (102 aa).

This is an uncharacterized protein from Homo sapiens (Human).